Here is a 378-residue protein sequence, read N- to C-terminus: D-alanine--D-alanine ligase (378 aa).

The ATP-grasp domain maps to K141–Q347. A171 to V226 serves as a coordination point for ATP. Mg(2+) contacts are provided by D301, E314, and N316.

The protein belongs to the D-alanine--D-alanine ligase family. Mg(2+) serves as cofactor. It depends on Mn(2+) as a cofactor.

The protein localises to the cytoplasm. It catalyses the reaction 2 D-alanine + ATP = D-alanyl-D-alanine + ADP + phosphate + H(+). The protein operates within cell wall biogenesis; peptidoglycan biosynthesis. Functionally, cell wall formation. The sequence is that of D-alanine--D-alanine ligase from Ligilactobacillus salivarius (strain UCC118) (Lactobacillus salivarius).